We begin with the raw amino-acid sequence, 150 residues long: Ribonuclease HI (150 aa).

The 141-residue stretch at 1–141 (MKLINAYTDG…VDVLARGQAM (141 aa)) folds into the RNase H type-1 domain. Residues D9, E47, D69, and D133 each coordinate Mg(2+).

Belongs to the RNase H family. Monomer. Mg(2+) is required as a cofactor.

The protein resides in the cytoplasm. It carries out the reaction Endonucleolytic cleavage to 5'-phosphomonoester.. Endonuclease that specifically degrades the RNA of RNA-DNA hybrids. The protein is Ribonuclease HI of Xylella fastidiosa (strain Temecula1 / ATCC 700964).